A 292-amino-acid polypeptide reads, in one-letter code: Protease HtpX homolog (292 aa).

The next 2 membrane-spanning stretches (helical) occupy residues I4–L24 and L38–L58. H144 serves as a coordination point for Zn(2+). The active site involves E145. Residue H148 coordinates Zn(2+). The next 2 helical transmembrane spans lie at G152 to S172 and I199 to F219. Residue E224 coordinates Zn(2+).

The protein belongs to the peptidase M48B family. It depends on Zn(2+) as a cofactor.

It is found in the cell inner membrane. This is Protease HtpX homolog from Acidovorax ebreus (strain TPSY) (Diaphorobacter sp. (strain TPSY)).